Here is a 388-residue protein sequence, read N- to C-terminus: FMRFamide neuropeptides (388 aa).

The first 21 residues, 1-21 (MVAPLLVFLFSLQLCHTTSWA), serve as a signal peptide directing secretion. The propeptide occupies 22 to 172 (YVGGNSLNSN…SNHQVIRDSR (151 aa)). The interval 40–74 (FPAGTSNEVPEDAANGQDDNDDSQLTEPNDNNAPL) is disordered. The segment covering 64-74 (LTEPNDNNAPL) has biased composition (polar residues). Phenylalanine amide occurs at positions 179, 196, 208, 219, 230, 241, 253, 265, 277, 289, 301, 313, 325, 337, 346, 359, and 372. Residues 360-388 (GRTPTQSSDFMRFGKSLDKSENKTSDLQK) are disordered. A compositionally biased stretch (basic and acidic residues) spans 374-388 (KSLDKSENKTSDLQK). A propeptide spanning residues 375 to 388 (SLDKSENKTSDLQK) is cleaved from the precursor.

It belongs to the FARP (FMRFamide related peptide) family. As to expression, in the brain, expressed in 2 large cells in the lateral neurons in each optic lobe, 2 slightly bigger cells on both sides of the tritocerebrum, around 14 small cells in the dorsal area, around 13 cells in the subesophageal ganglion, and in the central brain.

It is found in the secreted. The sequence is that of FMRFamide neuropeptides from Musca domestica (House fly).